Here is a 181-residue protein sequence, read N- to C-terminus: NADH-quinone oxidoreductase subunit I 2 (181 aa).

4Fe-4S ferredoxin-type domains lie at Leu44–Ala74 and Arg90–Asp119. Residues Cys54, Cys57, Cys60, Cys64, Cys99, Cys102, Cys105, and Cys109 each coordinate [4Fe-4S] cluster.

Belongs to the complex I 23 kDa subunit family. NDH-1 is composed of 14 different subunits. Subunits NuoA, H, J, K, L, M, N constitute the membrane sector of the complex. Requires [4Fe-4S] cluster as cofactor.

Its subcellular location is the cell membrane. It catalyses the reaction a quinone + NADH + 5 H(+)(in) = a quinol + NAD(+) + 4 H(+)(out). In terms of biological role, NDH-1 shuttles electrons from NADH, via FMN and iron-sulfur (Fe-S) centers, to quinones in the respiratory chain. The immediate electron acceptor for the enzyme in this species is believed to be menaquinone. Couples the redox reaction to proton translocation (for every two electrons transferred, four hydrogen ions are translocated across the cytoplasmic membrane), and thus conserves the redox energy in a proton gradient. The protein is NADH-quinone oxidoreductase subunit I 2 of Mycolicibacterium paratuberculosis (strain ATCC BAA-968 / K-10) (Mycobacterium paratuberculosis).